The following is a 284-amino-acid chain: Diaminopimelate epimerase (284 aa).

Substrate contacts are provided by N13 and N66. C75 acts as the Proton donor in catalysis. Residues 76–77 (GN), N166, N199, and 217–218 (ER) each bind substrate. Catalysis depends on C226, which acts as the Proton acceptor. 227 to 228 (GT) provides a ligand contact to substrate.

This sequence belongs to the diaminopimelate epimerase family. Homodimer.

It localises to the cytoplasm. The enzyme catalyses (2S,6S)-2,6-diaminopimelate = meso-2,6-diaminopimelate. Its pathway is amino-acid biosynthesis; L-lysine biosynthesis via DAP pathway; DL-2,6-diaminopimelate from LL-2,6-diaminopimelate: step 1/1. Catalyzes the stereoinversion of LL-2,6-diaminopimelate (L,L-DAP) to meso-diaminopimelate (meso-DAP), a precursor of L-lysine and an essential component of the bacterial peptidoglycan. This Halothermothrix orenii (strain H 168 / OCM 544 / DSM 9562) protein is Diaminopimelate epimerase.